We begin with the raw amino-acid sequence, 806 residues long: Acetyl-CoA decarbonylase/synthase complex subunit alpha 1 (806 aa).

Residues Cys73, Cys76, Cys77, Cys79, Cys84, and Cys94 each coordinate [4Fe-4S] cluster. Residue His117 participates in CO binding. Residues His250, Cys278, and Cys323 each contribute to the [Ni-4Fe-4S] cluster site. 2 4Fe-4S ferredoxin-type domains span residues 407-436 (DEEF…IPEA) and 446-475 (SYLE…LNII). The [4Fe-4S] cluster site is built by Cys417, Cys420, Cys423, Cys427, Cys455, Cys458, Cys461, and Cys465. Positions 523, 552, and 587 each coordinate [Ni-4Fe-4S] cluster.

The protein belongs to the Ni-containing carbon monoxide dehydrogenase family. As to quaternary structure, heterotetramer of two alpha and two epsilon subunits. The ACDS complex is made up of alpha, epsilon, beta, gamma and delta subunits with a probable stoichiometry of (alpha(2)epsilon(2))(4)-beta(8)-(gamma(1)delta(1))(8). Requires [4Fe-4S] cluster as cofactor. The cofactor is [Ni-4Fe-4S] cluster.

The catalysed reaction is CO + 2 oxidized [2Fe-2S]-[ferredoxin] + H2O = 2 reduced [2Fe-2S]-[ferredoxin] + CO2 + 2 H(+). It participates in one-carbon metabolism; methanogenesis from acetate. Part of the ACDS complex that catalyzes the reversible cleavage of acetyl-CoA, allowing growth on acetate as sole source of carbon and energy. The alpha-epsilon subcomponent functions as a carbon monoxide dehydrogenase. The protein is Acetyl-CoA decarbonylase/synthase complex subunit alpha 1 of Methanosarcina acetivorans (strain ATCC 35395 / DSM 2834 / JCM 12185 / C2A).